The primary structure comprises 55 residues: Conotoxin Cal22c (55 aa).

The propeptide occupies 1–5 (GRPSA).

Contains 4 disulfide bonds. Expressed by the venom duct.

The protein resides in the secreted. Functionally, probable neurotoxin with unknown target. Possibly targets ion channels. The sequence is that of Conotoxin Cal22c from Californiconus californicus (California cone).